The sequence spans 221 residues: SIN3-HDAC complex-associated factor (221 aa).

The segment covering 112–121 has biased composition (basic and acidic residues); it reads QKEFKRHNSD. 2 disordered regions span residues 112–152 and 201–221; these read QKEF…MASG and AAAE…TQEW. A compositionally biased stretch (low complexity) spans 124–135; that stretch reads STTSSASPAQSP. Polar residues predominate over residues 136–152; it reads CYSNQSDDGSDTEMASG.

Belongs to the SINHCAF family. In terms of assembly, interacts with the Sin3/HDAC corepressor complex at least composed of BRMS1, BRMS1L, ING2, SAP30, SAP30L and HDAC1. Found in a complex composed of at least SINHCAF, SIN3A, HDAC1, SAP30, RBBP4, OGT and TET1. Interacts with SIN3A and OGT.

The protein localises to the nucleus. Subunit of the Sin3 deacetylase complex (Sin3/HDAC), this subunit is important for the repression of genes encoding components of the TGF-beta signaling pathway. Core component of a SIN3A complex (composed of at least SINHCAF, SIN3A, HDAC1, SAP30, RBBP4, OGT and TET1) present in embryonic stem (ES) cells. Promotes the stability of SIN3A and its presence on chromatin and is essential for maintaining the potential of ES cells to proliferate rapidly, while ensuring a short G1-phase of the cell cycle, thereby preventing premature lineage priming. The protein is SIN3-HDAC complex-associated factor of Homo sapiens (Human).